The following is a 348-amino-acid chain: Phenylalanine--tRNA ligase alpha subunit (348 aa).

Mg(2+) is bound at residue E268.

This sequence belongs to the class-II aminoacyl-tRNA synthetase family. Phe-tRNA synthetase alpha subunit type 1 subfamily. Tetramer of two alpha and two beta subunits. It depends on Mg(2+) as a cofactor.

Its subcellular location is the cytoplasm. The enzyme catalyses tRNA(Phe) + L-phenylalanine + ATP = L-phenylalanyl-tRNA(Phe) + AMP + diphosphate + H(+). In Bordetella parapertussis (strain 12822 / ATCC BAA-587 / NCTC 13253), this protein is Phenylalanine--tRNA ligase alpha subunit.